Reading from the N-terminus, the 115-residue chain is Large ribosomal subunit protein bL19 (115 aa).

This sequence belongs to the bacterial ribosomal protein bL19 family.

Its function is as follows. This protein is located at the 30S-50S ribosomal subunit interface and may play a role in the structure and function of the aminoacyl-tRNA binding site. The protein is Large ribosomal subunit protein bL19 (rplS) of Thermotoga maritima (strain ATCC 43589 / DSM 3109 / JCM 10099 / NBRC 100826 / MSB8).